We begin with the raw amino-acid sequence, 338 residues long: tRNA N6-adenosine threonylcarbamoyltransferase (338 aa).

H110 and H114 together coordinate Fe cation. Substrate contacts are provided by residues 132–136 (VLSGG), D165, G178, and N274. D298 lines the Fe cation pocket.

The protein belongs to the KAE1 / TsaD family. Fe(2+) is required as a cofactor.

Its subcellular location is the cytoplasm. The catalysed reaction is L-threonylcarbamoyladenylate + adenosine(37) in tRNA = N(6)-L-threonylcarbamoyladenosine(37) in tRNA + AMP + H(+). Required for the formation of a threonylcarbamoyl group on adenosine at position 37 (t(6)A37) in tRNAs that read codons beginning with adenine. Is involved in the transfer of the threonylcarbamoyl moiety of threonylcarbamoyl-AMP (TC-AMP) to the N6 group of A37, together with TsaE and TsaB. TsaD likely plays a direct catalytic role in this reaction. The chain is tRNA N6-adenosine threonylcarbamoyltransferase from Borrelia recurrentis (strain A1).